A 124-amino-acid polypeptide reads, in one-letter code: Fluoride-specific ion channel FluC (124 aa).

4 helical membrane passes run 1–21, 37–57, 69–89, and 99–119; these read MIALIAAVSAGGIAGTLLRFA, GTLAVNLVGCLLIGLLYGLFL, GLIVGFLGGLTTFSSFSLDTV, and LALGYTSISVVGGLLATWAGL. G76 and T79 together coordinate Na(+).

This sequence belongs to the fluoride channel Fluc/FEX (TC 1.A.43) family.

Its subcellular location is the cell inner membrane. It carries out the reaction fluoride(in) = fluoride(out). Na(+) is not transported, but it plays an essential structural role and its presence is essential for fluoride channel function. Its function is as follows. Fluoride-specific ion channel. Important for reducing fluoride concentration in the cell, thus reducing its toxicity. The polypeptide is Fluoride-specific ion channel FluC (Pseudomonas putida (strain ATCC 700007 / DSM 6899 / JCM 31910 / BCRC 17059 / LMG 24140 / F1)).